We begin with the raw amino-acid sequence, 222 residues long: ATP synthase F(0) complex subunit a (222 aa).

6 helical membrane passes run 7 to 27, 64 to 84, 93 to 113, 132 to 152, 160 to 180, and 185 to 205; these read AFFDVPVGTMMLAIAFPAILL, WSLMLITLTLFIGLTNLLGLL, QLTVNLSMAIPLWTGTVILGF, FLIPMIIIIETISLLIRPVTL, ITAGHLLIHLTGTAALTLLSI, and ITVTFITVVVLTILELAVALI.

This sequence belongs to the ATPase A chain family. In terms of assembly, component of the ATP synthase complex composed at least of ATP5F1A/subunit alpha, ATP5F1B/subunit beta, ATP5MC1/subunit c (homooctomer), MT-ATP6/subunit a, MT-ATP8/subunit 8, ATP5ME/subunit e, ATP5MF/subunit f, ATP5MG/subunit g, ATP5MK/subunit k, ATP5MJ/subunit j, ATP5F1C/subunit gamma, ATP5F1D/subunit delta, ATP5F1E/subunit epsilon, ATP5PF/subunit F6, ATP5PB/subunit b, ATP5PD/subunit d, ATP5PO/subunit OSCP. ATP synthase complex consists of a soluble F(1) head domain (subunits alpha(3) and beta(3)) - the catalytic core - and a membrane F(0) domain - the membrane proton channel (subunits c, a, 8, e, f, g, k and j). These two domains are linked by a central stalk (subunits gamma, delta, and epsilon) rotating inside the F1 region and a stationary peripheral stalk (subunits F6, b, d, and OSCP). Interacts with DNAJC30; interaction is direct.

The protein resides in the mitochondrion inner membrane. The catalysed reaction is H(+)(in) = H(+)(out). Its function is as follows. Subunit a, of the mitochondrial membrane ATP synthase complex (F(1)F(0) ATP synthase or Complex V) that produces ATP from ADP in the presence of a proton gradient across the membrane which is generated by electron transport complexes of the respiratory chain. ATP synthase complex consist of a soluble F(1) head domain - the catalytic core - and a membrane F(1) domain - the membrane proton channel. These two domains are linked by a central stalk rotating inside the F(1) region and a stationary peripheral stalk. During catalysis, ATP synthesis in the catalytic domain of F(1) is coupled via a rotary mechanism of the central stalk subunits to proton translocation. With the subunit c (ATP5MC1), forms the proton-conducting channel in the F(0) domain, that contains two crucial half-channels (inlet and outlet) that facilitate proton movement from the mitochondrial intermembrane space (IMS) into the matrix. Protons are taken up via the inlet half-channel and released through the outlet half-channel, following a Grotthuss mechanism. This chain is ATP synthase F(0) complex subunit a, found in Mammuthus primigenius (Siberian woolly mammoth).